Consider the following 325-residue polypeptide: tRNA(Ile)-lysidine synthase (325 aa).

34 to 39 (SGGADS) contributes to the ATP binding site.

This sequence belongs to the tRNA(Ile)-lysidine synthase family.

It is found in the cytoplasm. The catalysed reaction is cytidine(34) in tRNA(Ile2) + L-lysine + ATP = lysidine(34) in tRNA(Ile2) + AMP + diphosphate + H(+). Ligates lysine onto the cytidine present at position 34 of the AUA codon-specific tRNA(Ile) that contains the anticodon CAU, in an ATP-dependent manner. Cytidine is converted to lysidine, thus changing the amino acid specificity of the tRNA from methionine to isoleucine. The protein is tRNA(Ile)-lysidine synthase of Rhodococcus opacus (strain B4).